The primary structure comprises 148 residues: Putative pre-16S rRNA nuclease (148 aa).

It belongs to the YqgF nuclease family.

It localises to the cytoplasm. Functionally, could be a nuclease involved in processing of the 5'-end of pre-16S rRNA. In Chlamydia trachomatis serovar A (strain ATCC VR-571B / DSM 19440 / HAR-13), this protein is Putative pre-16S rRNA nuclease.